We begin with the raw amino-acid sequence, 166 residues long: MPPKFDPSQVVDVYVRVTGGEVGAASSLAPKIGPLGLSPKKIGEDIAKETANDWKGLRVTVKLTVQNRQAKVSVVPSAAALVIKALKEPERDRKKTKNIKHSGHISLDDVIEIAKIMKHRSMAKELAGTVKEILRTCVSVGCTVDGKDPKDLQQEIADGDVEIPLD.

This sequence belongs to the universal ribosomal protein uL11 family.

Functionally, this protein binds directly to 26S ribosomal RNA. The protein is Large ribosomal subunit protein uL11 (RPL12) of Prunus armeniaca (Apricot).